The sequence spans 237 residues: Ribosomal RNA small subunit methyltransferase G (237 aa).

S-adenosyl-L-methionine is bound by residues G78, F83, 129 to 130 (AE), and R148. The segment at 216 to 237 (SKKKETPNKYPRKAGTPNKKPL) is disordered.

The protein belongs to the methyltransferase superfamily. RNA methyltransferase RsmG family.

Its subcellular location is the cytoplasm. Specifically methylates the N7 position of a guanine in 16S rRNA. The sequence is that of Ribosomal RNA small subunit methyltransferase G from Streptococcus agalactiae serotype V (strain ATCC BAA-611 / 2603 V/R).